The sequence spans 158 residues: Acetolactate synthase small subunit (158 aa).

The ACT domain maps to 4–78 (ILSVLLENES…DVLRVIKVGQ (75 aa)).

This sequence belongs to the acetolactate synthase small subunit family. As to quaternary structure, dimer of large and small chains.

The catalysed reaction is 2 pyruvate + H(+) = (2S)-2-acetolactate + CO2. It functions in the pathway amino-acid biosynthesis; L-isoleucine biosynthesis; L-isoleucine from 2-oxobutanoate: step 1/4. It participates in amino-acid biosynthesis; L-valine biosynthesis; L-valine from pyruvate: step 1/4. This chain is Acetolactate synthase small subunit (ilvH), found in Buchnera aphidicola subsp. Schizaphis graminum (strain Sg).